The primary structure comprises 423 residues: MDERFEIKDIVAREVIDSRGNPTVEVEVITKGNGYGSAIVPSGASTGTHEALELRDKEKRFGGKGVLMAVENVNSIIRPEILGYDARMQREIDTIMIELDGTPNKSRLGANAILAVSLAVAKAAAATAKIPLYKYLGGFNSYVMPVPMMNVINGGKHAGNDLDLQEFMIMPVGATSISEAVRMGSEVYHVLKNVILEKYGKNAVNVGDEGGFAPPLKTSREALDLLTESVKKAGYEDEVVFALDAAASEFYKDGYYYVEGKKLTREELLDYYKALVDEYPIVSIEDPFHEEDFEGFAMITKELDIQIVGDDLFVTNVERLRKGIEMKAANALLLKVNQIGTLSEAVDAAQLAFRNGYGVVVSHRSGETEDTTIADLSVALNSGQIKTGAPARGERTAKYNQLIRIEQELGLSKYAGRNFRCPF.

Position 165 (Gln-165) interacts with (2R)-2-phosphoglycerate. The Proton donor role is filled by Glu-209. Mg(2+) contacts are provided by Asp-244, Glu-285, and Asp-310. Residues Lys-335, Arg-364, Ser-365, and Lys-386 each coordinate (2R)-2-phosphoglycerate. The active-site Proton acceptor is the Lys-335.

This sequence belongs to the enolase family. In terms of assembly, homooctamer formed by a tetramer of dimers. Requires Mg(2+) as cofactor.

The protein resides in the cytoplasm. Its subcellular location is the secreted. The protein localises to the cell surface. The enzyme catalyses (2R)-2-phosphoglycerate = phosphoenolpyruvate + H2O. The protein operates within carbohydrate degradation; glycolysis; pyruvate from D-glyceraldehyde 3-phosphate: step 4/5. The covalent binding to the substrate causes inactivation of the enzyme, and possibly serves as a signal for the export of the protein. Catalyzes the reversible conversion of 2-phosphoglycerate (2-PG) into phosphoenolpyruvate (PEP). It is essential for the degradation of carbohydrates via glycolysis. The protein is Enolase of Methanocaldococcus jannaschii (strain ATCC 43067 / DSM 2661 / JAL-1 / JCM 10045 / NBRC 100440) (Methanococcus jannaschii).